Consider the following 190-residue polypeptide: Flavodoxin-like domain-containing protein BilS (190 aa).

It functions in the pathway porphyrin-containing compound metabolism; protoheme degradation. Together with BilR, catalyzes reduction of mesobilirubin and/or bilirubin to urobilinogen, a key step during heme degradation. BilS is probably involved in electron transfer for the bilirubin reductase BilR. The sequence is that of Flavodoxin-like domain-containing protein BilS from Clostridium symbiosum (strain WAL-14163).